A 271-amino-acid polypeptide reads, in one-letter code: Aminoglycoside N(3)-acetyltransferase III (271 aa).

CoA-binding residues include His-31, Ala-32, Ser-33, Val-34, and Lys-35. A 2-deoxystreptamine antibiotic is bound by residues Tyr-64, Asp-72, and Glu-102. 3 residues coordinate CoA: Ser-104, Val-105, and Phe-109. Residues Glu-123, Tyr-146, and Asp-170 each coordinate a 2-deoxystreptamine antibiotic. CoA is bound by residues Thr-171 and Thr-173. Positions 176, 212, 213, and 221 each coordinate a 2-deoxystreptamine antibiotic.

This sequence belongs to the antibiotic N-acetyltransferase family. Homodimer.

The catalysed reaction is a 2-deoxystreptamine antibiotic + acetyl-CoA = an N(3)-acetyl-2-deoxystreptamine antibiotic + CoA + H(+). Resistance to antibiotics containing the 2-deoxy-streptamine ring including dibekacin, gentamicin, kanamycin, sisomicin, tobramycin and neomycin, but not to amikacin or netilmicin. Acetylates a broad range of both 4,5- and 4,6-disubstituted aminoglycosides, including neomycin, paromomycin, ribostamycin, sisomicin, gentamicin, tobramycin and kanamycin, with no preference of one disubstitution over the other. Acetylates sisomicin and kanamycin most and least efficiently, respectively. Does not modify plazomicin. In Pseudomonas aeruginosa, this protein is Aminoglycoside N(3)-acetyltransferase III.